A 91-amino-acid polypeptide reads, in one-letter code: DNA-directed RNA polymerase subunit omega (91 aa).

This sequence belongs to the RNA polymerase subunit omega family. The RNAP catalytic core consists of 2 alpha, 1 beta, 1 beta' and 1 omega subunit. When a sigma factor is associated with the core the holoenzyme is formed, which can initiate transcription.

The enzyme catalyses RNA(n) + a ribonucleoside 5'-triphosphate = RNA(n+1) + diphosphate. Functionally, promotes RNA polymerase assembly. Latches the N- and C-terminal regions of the beta' subunit thereby facilitating its interaction with the beta and alpha subunits. The protein is DNA-directed RNA polymerase subunit omega of Erwinia tasmaniensis (strain DSM 17950 / CFBP 7177 / CIP 109463 / NCPPB 4357 / Et1/99).